The chain runs to 257 residues: Imidazole glycerol phosphate synthase subunit HisF (257 aa).

Active-site residues include Asp11 and Asp130.

Belongs to the HisA/HisF family. Heterodimer of HisH and HisF.

Its subcellular location is the cytoplasm. It catalyses the reaction 5-[(5-phospho-1-deoxy-D-ribulos-1-ylimino)methylamino]-1-(5-phospho-beta-D-ribosyl)imidazole-4-carboxamide + L-glutamine = D-erythro-1-(imidazol-4-yl)glycerol 3-phosphate + 5-amino-1-(5-phospho-beta-D-ribosyl)imidazole-4-carboxamide + L-glutamate + H(+). It functions in the pathway amino-acid biosynthesis; L-histidine biosynthesis; L-histidine from 5-phospho-alpha-D-ribose 1-diphosphate: step 5/9. In terms of biological role, IGPS catalyzes the conversion of PRFAR and glutamine to IGP, AICAR and glutamate. The HisF subunit catalyzes the cyclization activity that produces IGP and AICAR from PRFAR using the ammonia provided by the HisH subunit. In Francisella philomiragia subsp. philomiragia (strain ATCC 25017 / CCUG 19701 / FSC 153 / O#319-036), this protein is Imidazole glycerol phosphate synthase subunit HisF.